The following is a 274-amino-acid chain: MKKTQTWIITCIYLQLLLFNPLVRTKGICRNRVTDDVKDVTKLVANLPKDYKIALNYVPGMDVLSSHCWIRVMVEQLSVSLTDLLDKFSNISEGLSNYSIIDKLVKIVDDLVECMEEHSSENVKKSPKNPEPRHFAPEDFFRIFNRSIDALKDLETVASKTSECVLPSTLSPEKDSRVSVTKPFMLPPVAASSLRNDSSSSNRKAANPLGDSNLQWAAMALPAFFSLVIGFAFGALYWKKKQPNLTRTAENIQINEEDNEISMLQEKEREFQEV.

Positions 1–25 (MKKTQTWIITCIYLQLLLFNPLVRT) are cleaved as a signal peptide. Residues 26-215 (KGICRNRVTD…ANPLGDSNLQ (190 aa)) are Extracellular-facing. Disulfide bonds link C29–C114 and C68–C164. N90, N97, N145, and N196 each carry an N-linked (GlcNAc...) asparagine glycan. The chain crosses the membrane as a helical span at residues 216–238 (WAAMALPAFFSLVIGFAFGALYW). At 239–274 (KKKQPNLTRTAENIQINEEDNEISMLQEKEREFQEV) the chain is on the cytoplasmic side.

This sequence belongs to the SCF family. As to quaternary structure, homodimer, non-covalently linked. Heterotetramer with KIT, binding two KIT molecules; thereby mediates KIT dimerization and subsequent activation by autophosphorylation. Post-translationally, a soluble form is produced by proteolytic processing of isoform 1 in the extracellular domain.

The protein localises to the cytoplasm. Its subcellular location is the cytoskeleton. It is found in the cell membrane. It localises to the cell projection. The protein resides in the lamellipodium. The protein localises to the filopodium. Its subcellular location is the secreted. Its function is as follows. Ligand for the receptor-type protein-tyrosine kinase KIT. Plays an essential role in the regulation of cell survival and proliferation, hematopoiesis, stem cell maintenance, gametogenesis, mast cell development, migration and function, and in melanogenesis. KITLG/SCF binding can activate several signaling pathways. Promotes phosphorylation of PIK3R1, the regulatory subunit of phosphatidylinositol 3-kinase, and subsequent activation of the kinase AKT1. KITLG/SCF and KIT also transmit signals via GRB2 and activation of RAS, RAF1 and the MAP kinases MAPK1/ERK2 and/or MAPK3/ERK1. KITLG/SCF and KIT promote activation of STAT family members STAT1, STAT3 and STAT5. KITLG/SCF and KIT promote activation of PLCG1, leading to the production of the cellular signaling molecules diacylglycerol and inositol 1,4,5-trisphosphate. KITLG/SCF acts synergistically with other cytokines, probably interleukins. The chain is Kit ligand (KITLG) from Neovison vison (American mink).